A 174-amino-acid chain; its full sequence is UPF0113 protein AF_0058 (174 aa).

The region spanning 87–161 (RNRVWVNERG…KVFVENLVDR (75 aa)) is the PUA domain.

The protein belongs to the UPF0113 family.

In Archaeoglobus fulgidus (strain ATCC 49558 / DSM 4304 / JCM 9628 / NBRC 100126 / VC-16), this protein is UPF0113 protein AF_0058.